The primary structure comprises 152 residues: UPF0266 membrane protein YobD (152 aa).

3 helical membrane-spanning segments follow: residues 6-26 (LVLILFIAALLAFAIYDQFIM), 45-65 (IDSVIFVGLIVILIYNNVTNH), and 67-87 (ALITTWLLSALALMGFYIFWI).

This sequence belongs to the UPF0266 family.

It localises to the cell inner membrane. This chain is UPF0266 membrane protein YobD, found in Shigella boydii serotype 18 (strain CDC 3083-94 / BS512).